A 275-amino-acid polypeptide reads, in one-letter code: Large ribosomal subunit protein uL2 (275 aa).

Residues 225–275 are disordered; sequence MNPIDHPHGGGEGRTSGGRHPVTPWGKPTKGKKTRSNKKTDRLIMRRRQTQ.

The protein belongs to the universal ribosomal protein uL2 family. Part of the 50S ribosomal subunit. Forms a bridge to the 30S subunit in the 70S ribosome.

One of the primary rRNA binding proteins. Required for association of the 30S and 50S subunits to form the 70S ribosome, for tRNA binding and peptide bond formation. It has been suggested to have peptidyltransferase activity; this is somewhat controversial. Makes several contacts with the 16S rRNA in the 70S ribosome. The protein is Large ribosomal subunit protein uL2 of Paramagnetospirillum magneticum (strain ATCC 700264 / AMB-1) (Magnetospirillum magneticum).